Reading from the N-terminus, the 164-residue chain is Protein SprT (164 aa).

One can recognise a SprT-like domain in the interval 14–156 (QQAETFFKRP…LCKRCRAILV (143 aa)). H69 contacts Zn(2+). E70 is a catalytic residue. H73 contributes to the Zn(2+) binding site.

It belongs to the SprT family. Zn(2+) serves as cofactor.

The protein resides in the cytoplasm. The chain is Protein SprT from Pseudomonas putida (strain GB-1).